Reading from the N-terminus, the 360-residue chain is Histidinol-phosphate aminotransferase 2 (360 aa).

An N6-(pyridoxal phosphate)lysine modification is found at lysine 218.

The protein belongs to the class-II pyridoxal-phosphate-dependent aminotransferase family. Histidinol-phosphate aminotransferase subfamily. Homodimer. Pyridoxal 5'-phosphate is required as a cofactor.

It catalyses the reaction L-histidinol phosphate + 2-oxoglutarate = 3-(imidazol-4-yl)-2-oxopropyl phosphate + L-glutamate. The protein operates within amino-acid biosynthesis; L-histidine biosynthesis; L-histidine from 5-phospho-alpha-D-ribose 1-diphosphate: step 7/9. The protein is Histidinol-phosphate aminotransferase 2 of Nitrosococcus oceani (strain ATCC 19707 / BCRC 17464 / JCM 30415 / NCIMB 11848 / C-107).